The chain runs to 352 residues: S-adenosylmethionine:tRNA ribosyltransferase-isomerase (352 aa).

Belongs to the QueA family. In terms of assembly, monomer.

It localises to the cytoplasm. It catalyses the reaction 7-aminomethyl-7-carbaguanosine(34) in tRNA + S-adenosyl-L-methionine = epoxyqueuosine(34) in tRNA + adenine + L-methionine + 2 H(+). It functions in the pathway tRNA modification; tRNA-queuosine biosynthesis. Its function is as follows. Transfers and isomerizes the ribose moiety from AdoMet to the 7-aminomethyl group of 7-deazaguanine (preQ1-tRNA) to give epoxyqueuosine (oQ-tRNA). This chain is S-adenosylmethionine:tRNA ribosyltransferase-isomerase, found in Syntrophomonas wolfei subsp. wolfei (strain DSM 2245B / Goettingen).